We begin with the raw amino-acid sequence, 195 residues long: Imidazoleglycerol-phosphate dehydratase (195 aa).

This sequence belongs to the imidazoleglycerol-phosphate dehydratase family.

The protein resides in the cytoplasm. It catalyses the reaction D-erythro-1-(imidazol-4-yl)glycerol 3-phosphate = 3-(imidazol-4-yl)-2-oxopropyl phosphate + H2O. Its pathway is amino-acid biosynthesis; L-histidine biosynthesis; L-histidine from 5-phospho-alpha-D-ribose 1-diphosphate: step 6/9. The chain is Imidazoleglycerol-phosphate dehydratase from Heliobacterium modesticaldum (strain ATCC 51547 / Ice1).